We begin with the raw amino-acid sequence, 179 residues long: Prion-like protein doppel (179 aa).

The N-terminal stretch at 1–25 (MKNRLGTWWVAILCMLLASHLSTVK) is a signal peptide. Residues 27–50 (RGIKHRFKWNRKVLPSSGGQITEA) are flexible tail. The globular stretch occupies residues 51-155 (RVAENRPGAF…KHCDFWLERG (105 aa)). 2 disulfides stabilise this stretch: C95/C148 and C109/C143. N-linked (GlcNAc...) asparagine glycans are attached at residues N99 and N111. A cu(2+) binding region spans residues 125 to 142 (KQDSKLHQRVLWRLIKEI). A lipid anchor (GPI-anchor amidated glycine) is attached at G155. Residues 156–179 (AALRVAVDQPAMVCLLGFVWFIVK) constitute a propeptide, removed in mature form.

The protein belongs to the prion family. N-glycosylated. N-glycosylated at two distinct sites. In terms of processing, O-glycosylated. Detected in testis. Detected within seminiferous tubules, on round and elongated spermatids (at protein level). Not detected in brain (at protein level). Detected in testis, and at low levels in heart. Expression in brain is very low and barely detectable.

Its subcellular location is the cell membrane. Its function is as follows. Required for normal acrosome reaction and for normal male fertility. Can bind Cu(2+). This Mus musculus (Mouse) protein is Prion-like protein doppel (Prnd).